We begin with the raw amino-acid sequence, 296 residues long: L-isoleucine 3(1)-dioxygenase (296 aa).

Fe cation contacts are provided by H176, D178, and H267.

This sequence belongs to the iron/ascorbate-dependent oxidoreductase family. The cofactor is L-ascorbate. Fe(2+) serves as cofactor.

The catalysed reaction is L-isoleucine + 2-oxoglutarate + O2 = 3(1)-hydroxy-L-isoleucine + succinate + CO2. Its function is as follows. Catalyzes the hydroxylation of L-isoleucine at the C-4' position to form L-4'-hydroxyisoleucine (4'-HIL). Exhibits low activity with L-valine and L-methionine. The chain is L-isoleucine 3(1)-dioxygenase from Pantoea ananatis (strain AJ13355).